The chain runs to 124 residues: Fluoride-specific ion channel FluC (124 aa).

4 helical membrane-spanning segments follow: residues 4-24, 35-55, 62-82, and 95-115; these read VLFVALGGSIGAVLRYLISLL, FGTLVVNILGSFLMGVIFALG, PEFKAFIGVGMLGALTTFSTF, and LVKAVFNVVVNVGVCIFVVYL. Na(+) contacts are provided by G74 and T77.

It belongs to the fluoride channel Fluc/FEX (TC 1.A.43) family.

It is found in the cell inner membrane. It carries out the reaction fluoride(in) = fluoride(out). With respect to regulation, na(+) is not transported, but it plays an essential structural role and its presence is essential for fluoride channel function. In terms of biological role, fluoride-specific ion channel. Important for reducing fluoride concentration in the cell, thus reducing its toxicity. This is Fluoride-specific ion channel FluC from Shewanella pealeana (strain ATCC 700345 / ANG-SQ1).